Consider the following 552-residue polypeptide: N-acetylglucosamine-6-sulfatase (552 aa).

An N-terminal signal peptide occupies residues 1-36 (MRLLPLAPGRLRRGSPRHLPSCSPALLLLVLGGCLG). Ca(2+) contacts are provided by Asp55, Asp56, and Cys91. Cys91 functions as the Nucleophile in the catalytic mechanism. Cys91 is modified (3-oxoalanine (Cys)). 7 N-linked (GlcNAc...) asparagine glycosylation sites follow: Asn111, Asn117, Asn183, Asn198, Asn210, Asn279, and Asn317. Positions 326 and 327 each coordinate Ca(2+). Asn362, Asn387, Asn405, Asn422, Asn449, and Asn480 each carry an N-linked (GlcNAc...) asparagine glycan. A Phosphoserine modification is found at Ser541.

Belongs to the sulfatase family. Requires Ca(2+) as cofactor. In terms of processing, the form A (78 kDa) is processed by internal peptidase cleavage to a 32 kDa N-terminal species (form B) and a 48 kDa C-terminal species. The conversion to 3-oxoalanine (also known as C-formylglycine, FGly), of a serine or cysteine residue in prokaryotes and of a cysteine residue in eukaryotes, is critical for catalytic activity.

Its subcellular location is the lysosome. The catalysed reaction is Hydrolysis of the 6-sulfate groups of the N-acetyl-D-glucosamine 6-sulfate units of heparan sulfate and keratan sulfate.. Functionally, hydrolyzes 6-sulfate groups in N-acetyl-d-glucosaminide units of heparin sulfate and keratan sulfate. This is N-acetylglucosamine-6-sulfatase (GNS) from Homo sapiens (Human).